Consider the following 452-residue polypeptide: Trigger factor (452 aa).

The region spanning 171 to 256 (GDRVTLAFKG…ATLIEAPQDA (86 aa)) is the PPIase FKBP-type domain.

It belongs to the FKBP-type PPIase family. Tig subfamily.

The protein resides in the cytoplasm. It carries out the reaction [protein]-peptidylproline (omega=180) = [protein]-peptidylproline (omega=0). Involved in protein export. Acts as a chaperone by maintaining the newly synthesized protein in an open conformation. Functions as a peptidyl-prolyl cis-trans isomerase. The polypeptide is Trigger factor (Afipia carboxidovorans (strain ATCC 49405 / DSM 1227 / KCTC 32145 / OM5) (Oligotropha carboxidovorans)).